The chain runs to 340 residues: Phenylalanine--tRNA ligase alpha subunit (340 aa).

Glu-255 serves as a coordination point for Mg(2+).

This sequence belongs to the class-II aminoacyl-tRNA synthetase family. Phe-tRNA synthetase alpha subunit type 1 subfamily. Tetramer of two alpha and two beta subunits. The cofactor is Mg(2+).

Its subcellular location is the cytoplasm. It catalyses the reaction tRNA(Phe) + L-phenylalanine + ATP = L-phenylalanyl-tRNA(Phe) + AMP + diphosphate + H(+). This chain is Phenylalanine--tRNA ligase alpha subunit, found in Exiguobacterium sibiricum (strain DSM 17290 / CCUG 55495 / CIP 109462 / JCM 13490 / 255-15).